An 83-amino-acid polypeptide reads, in one-letter code: uncharacterized protein (83 aa).

This is an uncharacterized protein from Archaeoglobus fulgidus (strain ATCC 49558 / DSM 4304 / JCM 9628 / NBRC 100126 / VC-16).